The following is a 606-amino-acid chain: V-type proton ATPase catalytic subunit A (606 aa).

239–246 is a binding site for ATP; sequence GAFGCGKT.

The protein belongs to the ATPase alpha/beta chains family. In terms of assembly, V-ATPase is a heteromultimeric enzyme made up of two complexes: the ATP-hydrolytic V1 complex and the proton translocation V0 complex. The V1 complex consists of three catalytic AB heterodimers that form a heterohexamer, three peripheral stalks each consisting of EG heterodimers, one central rotor including subunits D and F, and the regulatory subunits C and H. The proton translocation complex V0 consists of the proton transport subunit a, a ring of proteolipid subunits c9c'', rotary subunit d, subunits e and f, and the accessory subunits vah-19/Ac45 and vah-20/PRR.

It carries out the reaction ATP + H2O + 4 H(+)(in) = ADP + phosphate + 5 H(+)(out). Its function is as follows. Catalytic subunit of the V1 complex of vacuolar(H+)-ATPase (V-ATPase), a multisubunit enzyme composed of a peripheral complex (V1) that hydrolyzes ATP and a membrane integral complex (V0) that translocates protons. V-ATPase is responsible for acidifying and maintaining the pH of intracellular compartments and in some cell types, is targeted to the plasma membrane, where it is responsible for acidifying the extracellular environment. Required along with other vacuolar ATPase components for the removal of protein aggregates which form in immature oocytes in the distal gonad. This removal occurs as the oocytes mature and move to the proximal gonad, is triggered by the introduction of sperm through mating and occurs before fertilization. The introduction of sperm triggers V-ATPase accumulation in proximal oocytes and induces lysosomal acidification which leads to engulfing of protein aggregates by lysosomes and subsequent clearance of the aggregates. Lysosomal acidification also leads to changes in mitochondrial morphology and function. Mitochondria in distal immature oocytes are fragmented, produce high levels of reactive oxygen species (ROS) and have high membrane potential, indicative of metabolic inactivity. In contrast, mitochondria in proximal mature oocytes are tubular with lower ROS levels and membrane potential, indicative of an active metabolic state required for aggregate mobilization before clearance. Involved in receptor-mediated endocytosis. This is V-type proton ATPase catalytic subunit A from Caenorhabditis briggsae.